The primary structure comprises 202 residues: Imidazoleglycerol-phosphate dehydratase (202 aa).

The protein belongs to the imidazoleglycerol-phosphate dehydratase family.

The protein localises to the cytoplasm. The catalysed reaction is D-erythro-1-(imidazol-4-yl)glycerol 3-phosphate = 3-(imidazol-4-yl)-2-oxopropyl phosphate + H2O. The protein operates within amino-acid biosynthesis; L-histidine biosynthesis; L-histidine from 5-phospho-alpha-D-ribose 1-diphosphate: step 6/9. This is Imidazoleglycerol-phosphate dehydratase from Rhizobium leguminosarum bv. trifolii (strain WSM2304).